The chain runs to 617 residues: Dopamine beta-hydroxylase (617 aa).

The Cytoplasmic segment spans residues 1–16; the sequence is MPALSRWASLPGPSMR. The chain crosses the membrane as a helical; Signal-anchor for type II membrane protein span at residues 17–37; that stretch reads EAAFMYSTAVAIFLVILVAAL. The Intragranular portion of the chain corresponds to 38-617; the sequence is QGSAPRESPL…TVVSIGGGKG (580 aa). The 117-residue stretch at 57–173 folds into the DOMON domain; sequence GSLELSWNVS…GTVHLVYGIL (117 aa). Asn64 carries an N-linked (GlcNAc...) asparagine glycan. Disulfide bonds link Cys154-Cys596, Cys232-Cys283, Cys269-Cys295, Cys390-Cys503, Cys394-Cys565, and Cys466-Cys488. Asn184 carries N-linked (GlcNAc...) (complex) asparagine glycosylation. Residue Tyr230 is part of the active site. Positions 262 and 263 each coordinate Cu(2+). Position 333 (His333) interacts with Cu(2+). Asn344 carries N-linked (GlcNAc...) asparagine glycosylation. Residue His412 is part of the active site. Residues His412, His414, and Met487 each coordinate Cu(2+). A glycan (N-linked (GlcNAc...) asparagine) is linked at Asn566. The segment at 590 to 617 is disordered; the sequence is EEPTPQCPTSQGRSPAGPTVVSIGGGKG.

The protein belongs to the copper type II ascorbate-dependent monooxygenase family. As to quaternary structure, homotetramer; composed of two disulfide-linked dimers. Cu(2+) is required as a cofactor. N-glycosylated. In terms of processing, proteolytic cleavage after the membrane-anchor leads to the release of the soluble form.

The protein resides in the cytoplasmic vesicle. The protein localises to the secretory vesicle lumen. It is found in the secretory vesicle. Its subcellular location is the chromaffin granule lumen. It localises to the secreted. The protein resides in the secretory vesicle membrane. The protein localises to the chromaffin granule membrane. The enzyme catalyses dopamine + 2 L-ascorbate + O2 = (R)-noradrenaline + 2 monodehydro-L-ascorbate radical + H2O. It participates in catecholamine biosynthesis; (R)-noradrenaline biosynthesis; (R)-noradrenaline from dopamine: step 1/1. In terms of biological role, catalyzes the hydroxylation of dopamine to noradrenaline (also known as norepinephrine), and is thus vital for regulation of these neurotransmitters. This Homo sapiens (Human) protein is Dopamine beta-hydroxylase (DBH).